Here is a 741-residue protein sequence, read N- to C-terminus: Copper-transporting ATPase (741 aa).

Residues 1–67 (MKESFYIEGM…LIEKLGYSPK (67 aa)) enclose the HMA domain. The Cytoplasmic portion of the chain corresponds to 1 to 83 (MKESFYIEGM…KKEFFSPNVK (83 aa)). Cu cation contacts are provided by Cys12 and Cys15. The helical transmembrane segment at 84 to 104 (LALAVIFTLFVVYLSMGAMLS) threads the bilayer. At 105-124 (PSLLPESLLTINNHSNFLNA) the chain is on the extracellular side. A helical transmembrane segment spans residues 125-144 (CLQLIGTLIVMHLGRDFYIQ). Topologically, residues 145–151 (GFKALWH) are cytoplasmic. Residues 152–172 (RQPNMSSLIAIGTSAALISSL) traverse the membrane as a helical segment. Residues 173–190 (WQLYFVYTSQWSYGHYYF) lie on the Extracellular side of the membrane. The chain crosses the membrane as a helical span at residues 191 to 211 (ESVCVILMFVMVGKRIENVSK). Topologically, residues 212-339 (DKALDAMQAL…KAEISRLADK (128 aa)) are cytoplasmic. Residues 340-362 (VSSVFVPSVIAIAILAFVVWLII) traverse the membrane as a helical segment. Residues 363–375 (APKPDFWWNFGIA) lie on the Extracellular side of the membrane. A helical transmembrane segment spans residues 376–393 (LEVFVSVLVISCPCALGL). The Cytoplasmic portion of the chain corresponds to 394 to 681 (ATPMSILVAN…KLSQATIKNI (288 aa)). The active-site 4-aspartylphosphate intermediate is Asp431. Residues Asp627 and Asp631 each coordinate Mg(2+). A helical transmembrane segment spans residues 682 to 701 (KENLFWAFCYNSVFIPLACG). The Extracellular segment spans residues 702–712 (VLYKANIMLSP). A helical membrane pass occupies residues 713-731 (AIAGLAMSLSSVSVVLNSQ). At 732-741 (RLRNFKIKDH) the chain is on the cytoplasmic side.

The protein belongs to the cation transport ATPase (P-type) (TC 3.A.3) family. Type IB subfamily.

The protein localises to the cell membrane. The catalysed reaction is Cu(2+)(in) + ATP + H2O = Cu(2+)(out) + ADP + phosphate + H(+). Functionally, probably involved in copper export. This is Copper-transporting ATPase (copA) from Helicobacter pylori (Campylobacter pylori).